The following is an 89-amino-acid chain: Small ribosomal subunit protein uS15 (89 aa).

This sequence belongs to the universal ribosomal protein uS15 family. In terms of assembly, part of the 30S ribosomal subunit. Forms a bridge to the 50S subunit in the 70S ribosome, contacting the 23S rRNA.

In terms of biological role, one of the primary rRNA binding proteins, it binds directly to 16S rRNA where it helps nucleate assembly of the platform of the 30S subunit by binding and bridging several RNA helices of the 16S rRNA. Forms an intersubunit bridge (bridge B4) with the 23S rRNA of the 50S subunit in the ribosome. This Caulobacter vibrioides (strain NA1000 / CB15N) (Caulobacter crescentus) protein is Small ribosomal subunit protein uS15.